A 211-amino-acid polypeptide reads, in one-letter code: Uracil phosphoribosyltransferase (211 aa).

Residues Arg78, Arg103, and Asp130–Thr138 contribute to the 5-phospho-alpha-D-ribose 1-diphosphate site. Residues Ile195 and Gly200–Ala202 each bind uracil. A 5-phospho-alpha-D-ribose 1-diphosphate-binding site is contributed by Asp201.

This sequence belongs to the UPRTase family. Mg(2+) serves as cofactor.

It carries out the reaction UMP + diphosphate = 5-phospho-alpha-D-ribose 1-diphosphate + uracil. The protein operates within pyrimidine metabolism; UMP biosynthesis via salvage pathway; UMP from uracil: step 1/1. Allosterically activated by GTP. Its function is as follows. Catalyzes the conversion of uracil and 5-phospho-alpha-D-ribose 1-diphosphate (PRPP) to UMP and diphosphate. The sequence is that of Uracil phosphoribosyltransferase from Arthrobacter sp. (strain FB24).